The following is a 401-amino-acid chain: Chromatin modification-related protein EAF3 (401 aa).

The Tudor-knot domain occupies 13-98 (RCLAFHGPLM…DEWVGYDRIR (86 aa)). Residues 39-53 (TSIPNDKPGGSSQAT) show a composition bias toward polar residues. 2 disordered regions span residues 39–65 (TSIP…GEDE) and 117–210 (EAKK…NMLH). Composition is skewed to basic and acidic residues over residues 54 to 63 (KEIKPQKLGE) and 117 to 126 (EAKKSLLEQQ). The segment covering 153 to 190 (SISKSTSQSFLTSSVSGRKSGRSSANSLHPGSSLRSSS) has biased composition (low complexity). S201 is modified (phosphoserine). One can recognise an MRG domain in the interval 216 to 399 (PTPKISLQIP…TSSQYEGVAL (184 aa)).

Belongs to the MRG family. In terms of assembly, component of the NuA4 histone acetyltransferase complex composed of at least ACT1, ARP4, YAF9, VID21, SWC4, EAF3, EAF5, EAF6, EAF7, EPL1, ESA1, TRA1 and YNG2.

Its subcellular location is the nucleus. Functionally, component of the NuA4 histone acetyltransferase complex which is involved in transcriptional activation of selected genes principally by acetylation of nucleosomal histone H4 and H2A. The NuA4 complex is also involved in DNA repair. The protein is Chromatin modification-related protein EAF3 (EAF3) of Saccharomyces cerevisiae (strain ATCC 204508 / S288c) (Baker's yeast).